A 479-amino-acid chain; its full sequence is ATP synthase subunit beta (479 aa).

Gly162–Thr169 provides a ligand contact to ATP.

It belongs to the ATPase alpha/beta chains family. As to quaternary structure, F-type ATPases have 2 components, CF(1) - the catalytic core - and CF(0) - the membrane proton channel. CF(1) has five subunits: alpha(3), beta(3), gamma(1), delta(1), epsilon(1). CF(0) has three main subunits: a(1), b(2) and c(9-12). The alpha and beta chains form an alternating ring which encloses part of the gamma chain. CF(1) is attached to CF(0) by a central stalk formed by the gamma and epsilon chains, while a peripheral stalk is formed by the delta and b chains.

The protein localises to the cell membrane. It carries out the reaction ATP + H2O + 4 H(+)(in) = ADP + phosphate + 5 H(+)(out). Its function is as follows. Produces ATP from ADP in the presence of a proton gradient across the membrane. The catalytic sites are hosted primarily by the beta subunits. The sequence is that of ATP synthase subunit beta from Mesoplasma florum (strain ATCC 33453 / NBRC 100688 / NCTC 11704 / L1) (Acholeplasma florum).